The sequence spans 272 residues: Regulatory protein RecX (272 aa).

Belongs to the RecX family.

The protein localises to the cytoplasm. In terms of biological role, modulates RecA activity. The sequence is that of Regulatory protein RecX from Oceanobacillus iheyensis (strain DSM 14371 / CIP 107618 / JCM 11309 / KCTC 3954 / HTE831).